Reading from the N-terminus, the 534-residue chain is uncharacterized protein (534 aa).

The signal sequence occupies residues 1–22; that stretch reads MGLRLLFSLICVFCISNIFTQA. An N-linked (GlcNAc...) asparagine glycan is attached at Asn31. Disordered regions lie at residues 70–145 and 176–418; these read PTYY…SSVS and SSLS…SSAP. Asn426 is a glycosylation site (N-linked (GlcNAc...) asparagine).

The protein resides in the endoplasmic reticulum. Its subcellular location is the cell membrane. This is an uncharacterized protein from Schizosaccharomyces pombe (strain 972 / ATCC 24843) (Fission yeast).